The sequence spans 364 residues: tRNA N6-adenosine threonylcarbamoyltransferase (364 aa).

Fe cation contacts are provided by histidine 115 and histidine 119. Substrate contacts are provided by residues leucine 137–glycine 141, aspartate 170, glycine 183, and asparagine 288. Residue aspartate 316 participates in Fe cation binding.

This sequence belongs to the KAE1 / TsaD family. Requires Fe(2+) as cofactor.

The protein resides in the cytoplasm. The catalysed reaction is L-threonylcarbamoyladenylate + adenosine(37) in tRNA = N(6)-L-threonylcarbamoyladenosine(37) in tRNA + AMP + H(+). Required for the formation of a threonylcarbamoyl group on adenosine at position 37 (t(6)A37) in tRNAs that read codons beginning with adenine. Is involved in the transfer of the threonylcarbamoyl moiety of threonylcarbamoyl-AMP (TC-AMP) to the N6 group of A37, together with TsaE and TsaB. TsaD likely plays a direct catalytic role in this reaction. This is tRNA N6-adenosine threonylcarbamoyltransferase from Bartonella bacilliformis (strain ATCC 35685 / KC583 / Herrer 020/F12,63).